Consider the following 242-residue polypeptide: Small ribosomal subunit protein uS2 (242 aa).

Belongs to the universal ribosomal protein uS2 family.

In Shewanella amazonensis (strain ATCC BAA-1098 / SB2B), this protein is Small ribosomal subunit protein uS2.